We begin with the raw amino-acid sequence, 239 residues long: IkB-like protein (239 aa).

4 ANK repeats span residues 48–77, 87–116, 124–153, and 158–187; these read NKIT…YPGE, DGNS…KNGI, NGVT…NPNR, and KGFT…KPLF. The short motif at 81–87 is the Nuclear localization signal element; it reads HYRRDKD. Positions 203–214 match the Nuclear localization signal motif; that stretch reads KKKPKIIITGCE. Residues 206 to 213 carry the PxIxITxC motif; Interaction with host PPP3CA motif; sequence PKIIITGC. Positions 228–231 match the FLCV motif motif; it reads FLCV.

This sequence belongs to the asfivirus A238L family. Interacts with host PPIA. Interacts with host PPP3CA/Calcineurin. Interacts with host RELA/p65; interaction of the 32 kDa form with host RELA results in the formation of a stable complex with NF-kappa-B. Interacts with host PPP3R1. Interacts with host EP300; this interaction inhibits the association of host EP300 with host RELA, JUN and NFATC2. The protein exists in a 28 kDa and a 32 kDa form, probably due to post-translational modifications which are neither phosphorylation, nor sumoylation.

Its subcellular location is the host nucleus. It localises to the host cytoplasm. IkB-like protein that inhibits the binding of NF-kappa-B to DNA, thereby downregulating pro-inflammatory cytokine production. Forms a heterodimer with the NF-kappa-B subunit RELA/p65 and prevents the activation of the NF-kappa-B transcription factor. Inhibits calcineurin function, which is required for the induction of nuclear factor of activated T cells (NFAT)-dependent immune response genes. Prevents the binding of substrates to calcineurin without affecting the phosphatase activity. Does not contain the serine residues that are phosphorylated by host IkB kinase and thus is not degraded following stimulation of the NFkB pathway. This Ornithodoros (relapsing fever ticks) protein is IkB-like protein (A238L).